A 304-amino-acid polypeptide reads, in one-letter code: Homoserine kinase (304 aa).

90-100 (PLARGLGSSAS) is an ATP binding site.

It belongs to the GHMP kinase family. Homoserine kinase subfamily.

The protein localises to the cytoplasm. It catalyses the reaction L-homoserine + ATP = O-phospho-L-homoserine + ADP + H(+). The protein operates within amino-acid biosynthesis; L-threonine biosynthesis; L-threonine from L-aspartate: step 4/5. Its function is as follows. Catalyzes the ATP-dependent phosphorylation of L-homoserine to L-homoserine phosphate. This is Homoserine kinase from Staphylococcus aureus (strain NCTC 8325 / PS 47).